Consider the following 670-residue polypeptide: ATP-dependent RNA helicase DDX18 (670 aa).

Composition is skewed to polar residues over residues 31-42 (SNLTLSETQNGD) and 83-105 (VTKS…SSNS). The disordered stretch occupies residues 31 to 169 (SNLTLSETQN…ESEVPSLPLG (139 aa)). Positions 117 to 154 (MVNDAEPDTKKAKTENKGKSEEESAETTKETENNVEKP) are enriched in basic and acidic residues. The Q motif signature appears at 179–207 (FASLCNLVNENTLKAIKEMGFTNMTEIQH). Positions 210-385 (IRPLLEGRDL…RISLKKEPLY (176 aa)) constitute a Helicase ATP-binding domain. 223–230 (AKTGSGKT) lines the ATP pocket. Positions 333–336 (DEAD) match the DEAD box motif. Residues 399–569 (GLEQGYVVCP…DIQSQLEKLI (171 aa)) form the Helicase C-terminal domain.

It belongs to the DEAD box helicase family. DDX18/HAS1 subfamily. In terms of assembly, interacts with NOL8; the interaction is RNA-dependent. Interacts with PRC2 complex components EZH2, SUZ2 and JARID2; these interactions prevent deposition of the repressive H3K27me3 mark onto rDNA in pluripotent cells.

It localises to the nucleus. It is found in the nucleolus. The protein localises to the chromosome. It catalyses the reaction ATP + H2O = ADP + phosphate + H(+). Functionally, ATP-dependent RNA helicase that plays a role in the regulation of R-loop homeostasis in both endogenous R-loop-prone regions and at sites of DNA damage. At endogenous loci such as actively transcribed genes, may act as a helicase to resolve the formation of R-loop during transcription and prevent the interference of R-loop with DNA-replication machinery. Also participates in the removal of DNA-lesion-associated R-loop. Plays an essential role for establishing pluripotency during embryogenesis and for pluripotency maintenance in embryonic stem cells. Mechanistically, prevents the polycomb repressive complex 2 (PRC2) from accessing rDNA loci and protects the active chromatin status in nucleolus. The sequence is that of ATP-dependent RNA helicase DDX18 (DDX18) from Homo sapiens (Human).